Consider the following 156-residue polypeptide: Small ribosomal subunit protein uS7 (156 aa).

This sequence belongs to the universal ribosomal protein uS7 family. Part of the 30S ribosomal subunit. Contacts proteins S9 and S11.

Its function is as follows. One of the primary rRNA binding proteins, it binds directly to 16S rRNA where it nucleates assembly of the head domain of the 30S subunit. Is located at the subunit interface close to the decoding center, probably blocks exit of the E-site tRNA. This chain is Small ribosomal subunit protein uS7, found in Bacillus cereus (strain ZK / E33L).